The primary structure comprises 620 residues: MDSHTLMQALIYLGSAALIVPIAVRLGLGSVLGYLIAGCIIGPWGLRLVTDAESILHFAEIGVVLMLFVIGLELDPQRLWKLRASVFGGGALQMVICGGLIGFFCMFLGLRWQVAELIGMTLALSSTAIAMQAMNERNLTVSQVGRSAFAVLLFQDIAAIPLVAMIPLLAASGASTTLGAFALSALKVAGALALVVLLGRYVTRPALRFVARSGLREVFSAVALFLVFGFGLLLEEVGLSMAMGAFLAGVLLASSEYRHALESDIEPFKGLLLGLFFIGVGMSIDFGTLVDNPLRILLLLAGFLAIKIVMLWLIARPLGVPAKQRRWFAVLLGQGSEFAFVVFGAAQMADVLEPEWAKALTLAVALSMAATPIFLVLLTRMEKAATGEAREADEIDEEQPRVIVAGFGRFGQIAGRLLLSSGVKMVVLDHDPDHIETLRKFGMKVFYGDATRMDLLESAGAAKAEVLINAIDDPQTNLQLSELVKTHFPHLQIIARARDVDHYIRLRQAGVAMPERETFESALKSGRQALEALGLGRYEARERADLFRHFNTQMVEEMAKGENDPLSRAAAYKRTSAMLSEIITEDREHLSLIQRHGWQGTAEGKHTGDIADEPQVKPST.

The next 12 membrane-spanning stretches (helical) occupy residues 4 to 24 (HTLM…PIAV), 26 to 46 (LGLG…PWGL), 54 to 74 (SILH…GLEL), 90 to 110 (GALQ…FLGL), 114 to 134 (VAEL…MQAM), 149 to 169 (FAVL…IPLL), 178 to 198 (LGAF…VVLL), 218 to 238 (VFSA…EEVG), 270 to 290 (GLLL…GTLV), 294 to 314 (LRIL…LWLI), 327 to 347 (WFAV…GAAQ), and 359 to 379 (ALTL…VLLT). In terms of domain architecture, RCK N-terminal spans 399-518 (QPRVIVAGFG…AGVAMPERET (120 aa)). The interval 599-620 (QGTAEGKHTGDIADEPQVKPST) is disordered.

This sequence belongs to the monovalent cation:proton antiporter 2 (CPA2) transporter (TC 2.A.37) family. KefC subfamily. Homodimer. Interacts with the regulatory subunit KefF.

It localises to the cell inner membrane. In terms of biological role, pore-forming subunit of a potassium efflux system that confers protection against electrophiles. Catalyzes K(+)/H(+) antiport. In Salmonella arizonae (strain ATCC BAA-731 / CDC346-86 / RSK2980), this protein is Glutathione-regulated potassium-efflux system protein KefC.